Reading from the N-terminus, the 302-residue chain is NADH-cytochrome b5 reductase 2 (302 aa).

The propeptide at 1 to 41 (MFSRLSRSHSKALPIALGTVAIAAATAFYFANRNQHSFVFN) is removed in mature form. The chain crosses the membrane as a helical span at residues 12-32 (ALPIALGTVAIAAATAFYFAN). Residues 51–155 (DKWIDLPISK…KGPIMKWKWQ (105 aa)) enclose the FAD-binding FR-type domain. 158–193 (QFKSITLLGAGTGINPLYQLAHHIVENPNDKTKVNL) is a binding site for FAD. Serine 278 carries the phosphoserine modification.

The protein belongs to the flavoprotein pyridine nucleotide cytochrome reductase family. FAD serves as cofactor. Post-translationally, there are two isoforms of NADH-cytochrome b5 reductase, a 34 kDa form (p34) and a 32 kDa form (p32). The p34 form becomes firmly anchored to the outer mitochondrial membrane after an incomplete translocation arrest. The p32 form is formed after translocation of the p34 precursor to the inner mitochondrial membrane, where it is processed by mitochondrial inner membrane peptidase (IMP) complex and released to the intermembrane space.

The protein localises to the mitochondrion intermembrane space. It is found in the mitochondrion outer membrane. It carries out the reaction 2 Fe(III)-[cytochrome b5] + NADH = 2 Fe(II)-[cytochrome b5] + NAD(+) + H(+). The outer membrane form may mediate the reduction of outer membrane cytochrome b5, and the soluble inter-membrane space form may transfer electrons from external NADH to cytochrome c, thereby mediating an antimycin-insensitive, energy-coupled oxidation of external NADH by yeast mitochondria. Involved in the reduction of D-erythroascorbyl free radicals. The chain is NADH-cytochrome b5 reductase 2 (MCR1) from Saccharomyces cerevisiae (strain YJM789) (Baker's yeast).